A 307-amino-acid polypeptide reads, in one-letter code: Ribosomal RNA small subunit methyltransferase H (307 aa).

S-adenosyl-L-methionine-binding positions include glycine 33–tyrosine 35, aspartate 51, phenylalanine 82, aspartate 96, and glutamine 103.

The protein belongs to the methyltransferase superfamily. RsmH family.

Its subcellular location is the cytoplasm. The enzyme catalyses cytidine(1402) in 16S rRNA + S-adenosyl-L-methionine = N(4)-methylcytidine(1402) in 16S rRNA + S-adenosyl-L-homocysteine + H(+). Specifically methylates the N4 position of cytidine in position 1402 (C1402) of 16S rRNA. The polypeptide is Ribosomal RNA small subunit methyltransferase H (Rickettsia rickettsii (strain Iowa)).